Consider the following 453-residue polypeptide: GTPase Der (453 aa).

EngA-type G domains lie at 3 to 167 (PIIV…INSK) and 188 to 361 (VKIA…HTSQ). GTP contacts are provided by residues 9-16 (GRTNVGKS), 57-61 (DTAGI), 119-122 (NKID), 194-201 (GKPNVGKS), 241-245 (DTAGM), and 306-309 (NKCD). In terms of domain architecture, KH-like spans 362–446 (KKIKTSQVMK…PIKIQFKETM (85 aa)).

Belongs to the TRAFAC class TrmE-Era-EngA-EngB-Septin-like GTPase superfamily. EngA (Der) GTPase family. As to quaternary structure, associates with the 50S ribosomal subunit.

In terms of biological role, GTPase that plays an essential role in the late steps of ribosome biogenesis. The chain is GTPase Der from Buchnera aphidicola subsp. Schizaphis graminum (strain Sg).